Reading from the N-terminus, the 215-residue chain is Redox-sensing transcriptional repressor Rex 2 (215 aa).

Positions 15–54 (VYLRYLKMLGDSGVKRIKSREFSEMIQIPSATIRRDFSHV) form a DNA-binding region, H-T-H motif. 89–94 (GCGNLG) contacts NAD(+).

It belongs to the transcriptional regulatory Rex family. In terms of assembly, homodimer.

It localises to the cytoplasm. In terms of biological role, modulates transcription in response to changes in cellular NADH/NAD(+) redox state. The chain is Redox-sensing transcriptional repressor Rex 2 from Enterococcus faecalis (strain ATCC 700802 / V583).